Consider the following 345-residue polypeptide: S-adenosylmethionine:tRNA ribosyltransferase-isomerase (345 aa).

It belongs to the QueA family. Monomer.

It is found in the cytoplasm. The catalysed reaction is 7-aminomethyl-7-carbaguanosine(34) in tRNA + S-adenosyl-L-methionine = epoxyqueuosine(34) in tRNA + adenine + L-methionine + 2 H(+). It participates in tRNA modification; tRNA-queuosine biosynthesis. Functionally, transfers and isomerizes the ribose moiety from AdoMet to the 7-aminomethyl group of 7-deazaguanine (preQ1-tRNA) to give epoxyqueuosine (oQ-tRNA). This Helicobacter pylori (strain Shi470) protein is S-adenosylmethionine:tRNA ribosyltransferase-isomerase.